Here is a 185-residue protein sequence, read N- to C-terminus: Hypoxanthine/guanine phosphoribosyltransferase (185 aa).

It belongs to the purine/pyrimidine phosphoribosyltransferase family. Archaeal HPRT subfamily. Homodimer.

It is found in the cytoplasm. It catalyses the reaction IMP + diphosphate = hypoxanthine + 5-phospho-alpha-D-ribose 1-diphosphate. The enzyme catalyses GMP + diphosphate = guanine + 5-phospho-alpha-D-ribose 1-diphosphate. The protein operates within purine metabolism; IMP biosynthesis via salvage pathway; IMP from hypoxanthine: step 1/1. Catalyzes a salvage reaction resulting in the formation of IMP that is energically less costly than de novo synthesis. This Methanococcus maripaludis (strain C5 / ATCC BAA-1333) protein is Hypoxanthine/guanine phosphoribosyltransferase.